The primary structure comprises 670 residues: MEGERRAYSKEVHQRINKQLEEIRRLEEVRGDLQVQISAAQNQVKRLRDSQRLENMDRLLKGRAQVQAEIEELQEQTRALDKQIQEWETRIFTHSKNVRSPGFILDQKVKIRRRIRILENQLDRVTCHFDNQLVRNAALREELDLLRIDRNRYLNVDRKLKKEIHHLHHLVSTLILSSTSAYAVREEAKAKMGLLRERAEKEEAQSEMEAQVLQRQILHLEQLHHFLKLKNNDRQPDPDVLEKREKQAGEVAEGVWKTSQERLVLCYEDALNKLSQLMGESDPDLLVQKYLEIEERNFAEFNFINEQNLELEHVQEEIKEMQEALVSARASKDDQHLLQEQQQKVLQQRMDKVHSEAERLEARFQDVRGQLEKLKADIQLLFTKAHCDSSMIDDLLGVKTSMGDRDMGLFLSLIEKRLVELLTVQAFLHAQSFTSLADAALLVLGQSLEDLPKKMAPLQPPDTLEDPPGFEASDDYPMSREELLSQVEKLVELQEQAEAQRQKDLAAAAAKLDGTLSVDLASTQRAGSSTVLVPTRHPHAIPGSILSHKTSRDRGSLGHVTFGGLSSSTGHLPSHITHGDPNTGHVTFGSTSASSGGHVTFRPVSASSYLGSTGYVGSSRGGENTEGGVESGGTASDSSGGLGSSRDHVSSTGPASSTGPGSSTSKDSRG.

Coiled coils occupy residues 9–155 (SKEV…RYLN), 183–224 (AVRE…EQLH), and 302–381 (NFIN…IQLL). Residues 454-473 (KMAPLQPPDTLEDPPGFEAS) are disordered. Position 517 is a phosphoserine (Ser517). Disordered regions lie at residues 526–596 (AGSS…ASSG) and 616–670 (VGSS…DSRG). A compositionally biased stretch (polar residues) spans 584 to 596 (GHVTFGSTSASSG). Positions 650 to 670 (SSTGPASSTGPGSSTSKDSRG) are enriched in low complexity.

Belongs to the ODA1/DCC2 family. Component of the outer dynein arm-docking complex along with ODAD2, ODAD3, ODAD4 and CLXN. Interacts with ODAD3. Interacts with ODAD4; this interaction may facilitate the recruitment and/or attachment of outer dynein arm docking complex proteins, including ODAD1, ODAD3, and ODAD4 to ciliary axonemes. Interacts with DNAH9. Interacts with MNS1. Interacts with PIERCE1 and PIERCE2; the interactions link the outer dynein arms docking complex (ODA-DC) to the internal microtubule inner proteins (MIP) in cilium axoneme. As to expression, expressed in nasal epithelial cells. Highly expressed in testis and also detected in lung, brain and kidney.

The protein localises to the cytoplasm. It is found in the cytoskeleton. It localises to the cilium axoneme. Functionally, component of the outer dynein arm-docking complex (ODA-DC) that mediates outer dynein arms (ODA) binding onto the doublet microtubule. Involved in mediating assembly of both ODAs and their axonemal docking complex onto ciliary microtubules. The chain is Outer dynein arm-docking complex subunit 1 from Homo sapiens (Human).